A 776-amino-acid chain; its full sequence is Homoaconitase, mitochondrial (776 aa).

A mitochondrion-targeting transit peptide spans 1 to 38 (MQSRLVSQSGLGRRWAVLRCALSKTYQRRTLTSTRRQF). The [4Fe-4S] cluster site is built by Cys394, Cys463, and Cys466.

The protein belongs to the aconitase/IPM isomerase family. The cofactor is [4Fe-4S] cluster.

It localises to the mitochondrion. It carries out the reaction (2R,3S)-homoisocitrate = cis-homoaconitate + H2O. Its pathway is amino-acid biosynthesis; L-lysine biosynthesis via AAA pathway; L-alpha-aminoadipate from 2-oxoglutarate: step 3/5. Catalyzes the reversible hydration of cis-homoaconitate to (2R,3S)-homoisocitrate, a step in the alpha-aminoadipate pathway for lysine biosynthesis. The protein is Homoaconitase, mitochondrial (lys4) of Emericella nidulans (strain FGSC A4 / ATCC 38163 / CBS 112.46 / NRRL 194 / M139) (Aspergillus nidulans).